The chain runs to 240 residues: Fimbriae Y protein (240 aa).

It is found in the fimbrium. This is Fimbriae Y protein (fimY) from Salmonella typhimurium (strain LT2 / SGSC1412 / ATCC 700720).